A 390-amino-acid polypeptide reads, in one-letter code: tRNA(Met) cytidine acetate ligase (390 aa).

Residues 7-20 (ITEYNPFHNGHIYH), glycine 101, asparagine 152, and arginine 177 each bind ATP.

Belongs to the TmcAL family.

It is found in the cytoplasm. The enzyme catalyses cytidine(34) in elongator tRNA(Met) + acetate + ATP = N(4)-acetylcytidine(34) in elongator tRNA(Met) + AMP + diphosphate. Catalyzes the formation of N(4)-acetylcytidine (ac(4)C) at the wobble position of elongator tRNA(Met), using acetate and ATP as substrates. First activates an acetate ion to form acetyladenylate (Ac-AMP) and then transfers the acetyl group to tRNA to form ac(4)C34. This is tRNA(Met) cytidine acetate ligase from Leuconostoc mesenteroides subsp. mesenteroides (strain ATCC 8293 / DSM 20343 / BCRC 11652 / CCM 1803 / JCM 6124 / NCDO 523 / NBRC 100496 / NCIMB 8023 / NCTC 12954 / NRRL B-1118 / 37Y).